The sequence spans 524 residues: Serine/threonine-protein kinase PAK 2 (524 aa).

The segment at 1 to 81 is disordered; sequence MSDNGELEDK…PEISPPSDFE (81 aa). Ser2 is subject to N-acetylserine. A phosphoserine mark is found at Ser2, Ser20, Ser55, Ser58, and Ser59. Phosphothreonine is present on Thr60. Lys62 bears the N6-acetyllysine mark. Phosphoserine is present on Ser64. Residues 67–81 are compositionally biased toward basic and acidic residues; the sequence is KEKERPEISPPSDFE. Positions 69 to 112 are GTPase-binding; it reads KERPEISPPSDFEHTIHVGFDAVTGEFTGMPEQWARLLQTSNIT. The autoregulatory region stretch occupies residues 69–137; that stretch reads KERPEISPPS…KFYDSNTVKQ (69 aa). Residues 74–87 enclose the CRIB domain; it reads ISPPSDFEHTIHVG. Positions 88-248 are linker; the sequence is FDAVTGEFTG…IVSIGDPKKK (161 aa). An N6-acetyllysine modification is found at Lys128. Thr134 is modified (phosphothreonine). Tyr139 bears the Phosphotyrosine mark. Ser141 carries the post-translational modification Phosphoserine. The segment at 142 to 190 is disordered; that stretch reads FTPPEKDGFPSGTPALNTKGSETSAVVTEEDDDDEDAAPPVIAPRPDHT. The residue at position 143 (Thr143) is a Phosphothreonine. The residue at position 152 (Ser152) is a Phosphoserine. Residues Thr154, Thr159, and Thr169 each carry the phosphothreonine modification. Residues 155 to 167 show a composition bias toward polar residues; that stretch reads PALNTKGSETSAV. Acidic residues predominate over residues 169 to 178; it reads TEEDDDDEDA. At Ser197 the chain carries Phosphoserine. A disordered region spans residues 204 to 228; it reads APVGDSNVDSGAKSSDKQKKKAKMT. A Nuclear localization signal motif is present at residues 245–251; that stretch reads PKKKYTR. One can recognise a Protein kinase domain in the interval 249–500; it reads YTRYEKIGQG…AKELLQHPFL (252 aa). Residues 255-263 and Lys278 each bind ATP; that span reads IGQGASGTV. Asp368 acts as the Proton acceptor in catalysis. The residue at position 402 (Thr402) is a Phosphothreonine; by autocatalysis.

Belongs to the protein kinase superfamily. STE Ser/Thr protein kinase family. STE20 subfamily. Interacts tightly with GTP-bound but not GDP-bound CDC42/p21 and RAC1. Interacts with SH3MD4. Interacts with SCRIB. Interacts with ARHGEF7 and GIT1. PAK-2p34 interacts with ARHGAP10. Interacts with RAC1. Full-length PAK2 is autophosphorylated when activated by CDC42/p21. Following cleavage, both peptides, PAK-2p27 and PAK-2p34, become highly autophosphorylated. Autophosphorylation of PAK-2p27 can occur in the absence of any effectors and is dependent on phosphorylation of Thr-402, because PAK-2p27 is acting as an exogenous substrate. In terms of processing, during apoptosis proteolytically cleaved by caspase-3 or caspase-3-like proteases to yield active PAK-2p34. Post-translationally, ubiquitinated, leading to its proteasomal degradation.

It is found in the cytoplasm. It localises to the nucleus. The protein resides in the perinuclear region. The protein localises to the membrane. The catalysed reaction is L-seryl-[protein] + ATP = O-phospho-L-seryl-[protein] + ADP + H(+). It catalyses the reaction L-threonyl-[protein] + ATP = O-phospho-L-threonyl-[protein] + ADP + H(+). Activated by binding small G proteins. Binding of GTP-bound CDC42 or RAC1 to the autoregulatory region releases monomers from the autoinhibited dimer, enables phosphorylation of Thr-402 and allows the kinase domain to adopt an active structure. Following caspase cleavage, autophosphorylated PAK-2p34 is constitutively active. Serine/threonine protein kinase that plays a role in a variety of different signaling pathways including cytoskeleton regulation, cell motility, cell cycle progression, apoptosis or proliferation. Acts as a downstream effector of the small GTPases CDC42 and RAC1. Activation by the binding of active CDC42 and RAC1 results in a conformational change and a subsequent autophosphorylation on several serine and/or threonine residues. Full-length PAK2 stimulates cell survival and cell growth. Phosphorylates MAPK4 and MAPK6 and activates the downstream target MAPKAPK5, a regulator of F-actin polymerization and cell migration. Phosphorylates JUN and plays an important role in EGF-induced cell proliferation. Phosphorylates many other substrates including histone H4 to promote assembly of H3.3 and H4 into nucleosomes, BAD, ribosomal protein S6, or MBP. Phosphorylates CASP7, thereby preventing its activity. Additionally, associates with ARHGEF7 and GIT1 to perform kinase-independent functions such as spindle orientation control during mitosis. On the other hand, apoptotic stimuli such as DNA damage lead to caspase-mediated cleavage of PAK2, generating PAK-2p34, an active p34 fragment that translocates to the nucleus and promotes cellular apoptosis involving the JNK signaling pathway. Caspase-activated PAK2 phosphorylates MKNK1 and reduces cellular translation. The polypeptide is Serine/threonine-protein kinase PAK 2 (Pak2) (Rattus norvegicus (Rat)).